Here is a 104-residue protein sequence, read N- to C-terminus: uncharacterized protein (104 aa).

The chain crosses the membrane as a helical span at residues 72 to 92 (LIFSHNIVIIVSPIYMISFII).

The protein resides in the membrane. This is an uncharacterized protein from Saccharomyces cerevisiae (strain ATCC 204508 / S288c) (Baker's yeast).